The primary structure comprises 446 residues: Probable glycine dehydrogenase (decarboxylating) subunit 1 (446 aa).

It belongs to the GcvP family. N-terminal subunit subfamily. In terms of assembly, the glycine cleavage system is composed of four proteins: P, T, L and H. In this organism, the P 'protein' is a heterodimer of two subunits.

The enzyme catalyses N(6)-[(R)-lipoyl]-L-lysyl-[glycine-cleavage complex H protein] + glycine + H(+) = N(6)-[(R)-S(8)-aminomethyldihydrolipoyl]-L-lysyl-[glycine-cleavage complex H protein] + CO2. The glycine cleavage system catalyzes the degradation of glycine. The P protein binds the alpha-amino group of glycine through its pyridoxal phosphate cofactor; CO(2) is released and the remaining methylamine moiety is then transferred to the lipoamide cofactor of the H protein. The polypeptide is Probable glycine dehydrogenase (decarboxylating) subunit 1 (Xanthobacter autotrophicus (strain ATCC BAA-1158 / Py2)).